A 251-amino-acid chain; its full sequence is Triosephosphate isomerase (251 aa).

Asn9–Lys11 contributes to the substrate binding site. Catalysis depends on His95, which acts as the Electrophile. Glu167 serves as the catalytic Proton acceptor. Residues Gly173, Ser213, and Gly234–Gly235 contribute to the substrate site. Phosphoserine is present on Ser213.

The protein belongs to the triosephosphate isomerase family. Homodimer.

The protein resides in the cytoplasm. The enzyme catalyses D-glyceraldehyde 3-phosphate = dihydroxyacetone phosphate. Its pathway is carbohydrate biosynthesis; gluconeogenesis. It participates in carbohydrate degradation; glycolysis; D-glyceraldehyde 3-phosphate from glycerone phosphate: step 1/1. Involved in the gluconeogenesis. Catalyzes stereospecifically the conversion of dihydroxyacetone phosphate (DHAP) to D-glyceraldehyde-3-phosphate (G3P). The protein is Triosephosphate isomerase of Shouchella clausii (strain KSM-K16) (Alkalihalobacillus clausii).